The following is a 176-amino-acid chain: Lipoprotein signal peptidase (176 aa).

A run of 4 helical transmembrane segments spans residues 26–46 (LWLA…IVIV), 57–77 (VTGF…SFLA), 82–102 (WQRW…VWLL), and 111–131 (FCFA…DRVI). Residues D137 and D155 contribute to the active site. The helical transmembrane segment at 147 to 167 (HWPAFNVADCAITVGAVLLIV) threads the bilayer.

The protein belongs to the peptidase A8 family.

The protein localises to the cell inner membrane. The catalysed reaction is Release of signal peptides from bacterial membrane prolipoproteins. Hydrolyzes -Xaa-Yaa-Zaa-|-(S,diacylglyceryl)Cys-, in which Xaa is hydrophobic (preferably Leu), and Yaa (Ala or Ser) and Zaa (Gly or Ala) have small, neutral side chains.. The protein operates within protein modification; lipoprotein biosynthesis (signal peptide cleavage). This protein specifically catalyzes the removal of signal peptides from prolipoproteins. In Cupriavidus taiwanensis (strain DSM 17343 / BCRC 17206 / CCUG 44338 / CIP 107171 / LMG 19424 / R1) (Ralstonia taiwanensis (strain LMG 19424)), this protein is Lipoprotein signal peptidase.